We begin with the raw amino-acid sequence, 86 residues long: Myosin light chain alkali (86 aa).

The EF-hand domain occupies 11-46; the sequence is GCYEDFIECLKLYDKEENGTMMLAELQHALLALGES.

As to quaternary structure, myosin is a hexamer of 2 heavy chains and 4 light chains.

The chain is Myosin light chain alkali (Mlc1) from Drosophila subobscura (Fruit fly).